The primary structure comprises 388 residues: 1-deoxy-D-xylulose 5-phosphate reductoisomerase (388 aa).

Residues Thr10, Gly11, Thr12, Ile13, Arg37, Gln38, and Asn122 each contribute to the NADPH site. Residue Lys123 participates in 1-deoxy-D-xylulose 5-phosphate binding. Glu124 contacts NADPH. Residue Asp148 coordinates Mn(2+). The 1-deoxy-D-xylulose 5-phosphate site is built by Ser149, Glu150, Ser179, and His202. Glu150 serves as a coordination point for Mn(2+). An NADPH-binding site is contributed by Gly208. 1-deoxy-D-xylulose 5-phosphate contacts are provided by Ser215, Asn220, Lys221, and Glu224. Residue Glu224 coordinates Mn(2+).

This sequence belongs to the DXR family. Mg(2+) is required as a cofactor. It depends on Mn(2+) as a cofactor.

The catalysed reaction is 2-C-methyl-D-erythritol 4-phosphate + NADP(+) = 1-deoxy-D-xylulose 5-phosphate + NADPH + H(+). It participates in isoprenoid biosynthesis; isopentenyl diphosphate biosynthesis via DXP pathway; isopentenyl diphosphate from 1-deoxy-D-xylulose 5-phosphate: step 1/6. Its function is as follows. Catalyzes the NADPH-dependent rearrangement and reduction of 1-deoxy-D-xylulose-5-phosphate (DXP) to 2-C-methyl-D-erythritol 4-phosphate (MEP). In Laribacter hongkongensis (strain HLHK9), this protein is 1-deoxy-D-xylulose 5-phosphate reductoisomerase.